Reading from the N-terminus, the 93-residue chain is UPF0728 protein C10orf53 (93 aa).

This sequence belongs to the UPF0728 family.

In Homo sapiens (Human), this protein is UPF0728 protein C10orf53 (C10orf53).